A 140-amino-acid polypeptide reads, in one-letter code: Probable disulfide formation protein C 2 (140 aa).

Residues 6–25 form a helical membrane-spanning segment; it reads KYHIAIAWTIATSAMLISLI. An intrachain disulfide couples C35 to C38. 2 consecutive transmembrane segments (helical) span residues 40–59 and 66–83; these read YQRM…MYRK and YAFP…YQIT. A disulfide bond links C95 and C101. Residues 110–134 form a helical membrane-spanning segment; the sequence is GFISIPMLSFVGFLAIIILLYINQI.

It belongs to the DsbB family. BdbC subfamily.

The protein resides in the cell membrane. In terms of biological role, required for disulfide bond formation in some proteins. The protein is Probable disulfide formation protein C 2 (bdbC2) of Bacillus anthracis.